A 140-amino-acid chain; its full sequence is Large ribosomal subunit protein mL43 (140 aa).

Belongs to the mitochondrion-specific ribosomal protein mL43 family. As to quaternary structure, component of the mitochondrial large ribosomal subunit (mt-LSU). Mature yeast 74S mitochondrial ribosomes consist of a small (37S) and a large (54S) subunit. The 37S small subunit contains a 15S ribosomal RNA (15S mt-rRNA) and 34 different proteins. The 54S large subunit contains a 21S rRNA (21S mt-rRNA) and 46 different proteins.

It is found in the mitochondrion. Component of the mitochondrial ribosome (mitoribosome), a dedicated translation machinery responsible for the synthesis of mitochondrial genome-encoded proteins, including at least some of the essential transmembrane subunits of the mitochondrial respiratory chain. The mitoribosomes are attached to the mitochondrial inner membrane and translation products are cotranslationally integrated into the membrane. Also has an extraribosomal function, being essential for mitochondrial genome integrity. May interact with MHR1 to take part in the mtDNA repair mechanism. In Saccharomyces cerevisiae (strain ATCC 204508 / S288c) (Baker's yeast), this protein is Large ribosomal subunit protein mL43 (MRPL51).